Consider the following 144-residue polypeptide: Cell division protein SepF (144 aa).

The protein belongs to the SepF family. In terms of assembly, homodimer. Interacts with FtsZ.

It is found in the cytoplasm. Functionally, cell division protein that is part of the divisome complex and is recruited early to the Z-ring. Probably stimulates Z-ring formation, perhaps through the cross-linking of FtsZ protofilaments. Its function overlaps with FtsA. The protein is Cell division protein SepF of Geobacillus sp. (strain WCH70).